Consider the following 1461-residue polypeptide: Periaxin (1461 aa).

S7 is subject to Phosphoserine. The PDZ domain occupies 16–99 (LVEIIVETEA…YKVSFCLKRT (84 aa)). The Nuclear export signal motif lies at 70-84 (VFFENFKYEDALRLL). The short motif at 118–196 (KGPRAKVAKL…RLQLPRLRVR (79 aa)) is the Nuclear localization signal element. A Phosphoserine modification is found at S133. Repeat copies occupy residues 431-435 (GPEVK), 439-443 (GPEVK), 447-451 (APEVK), 455-459 (VPEAA), 463-467 (VRLPE), 468-472 (VELPK), 473-477 (VSEMK), 481-485 (VPEMA), 486-490 (VPEVR), 494-498 (VELPK), 499-503 (VSEMK), 507-511 (VPEMA), 512-516 (VPEVR), 520-524 (VQLLK), 525-529 (VSEMK), 533-537 (VPEMA), 538-542 (VPEVR), 546-550 (VQLPK), 551-555 (VSEMK), 559-563 (VSEVA), 564-568 (VPEVR), 572-576 (VQLPK), 577-581 (VPEMK), 582-586 (VPEMK), 590-594 (VPEMK), 595-599 (LPEMK), 600-604 (LPEVQ), 608-612 (VPEMA), 613-617 (VPDVH), 618-622 (LPEVQ), 626-630 (VPEMK), 631-635 (LPEMK), 636-640 (LPEVK), 644-648 (VPEMA), 649-653 (VPDVH), 654-658 (LPEVQ), 662-666 (VPEMK), 670-674 (MPEMA), 675-679 (VPEVR), 683-687 (VQLPK), 688-692 (VSEMK), 696-700 (VPEMA), 701-705 (VPDVH), 706-710 (LPEVQ), 714-718 (VCEMK), 719-723 (VPDMK), 724-728 (LPEIK), 732-736 (VPEMA), 737-741 (VPDVH), 742-746 (LPEVQ), 750-754 (VSEIR), 755-759 (LPEMQ), 760-764 (VPKVP), 771-775 (APEVK), and 779-783 (APEVQ). The 55 X 5 AA approximate tandem repeats of [LVMAG]-[PSREQC]-[EDKL]-[LIVMAP]-[AQKHRPE]; that may have a tripeptide spacer of [LV]-P-[KER] stretch occupies residues 431–783 (GPEVKVPKGP…VKLPRAPEVQ (353 aa)). 2 positions are modified to phosphoserine: S900 and S1082. Positions 1318–1327 (EGAEEGEKAK) are enriched in basic and acidic residues. The interval 1318 to 1461 (EGAEEGEKAK…RMEGAQAAAV (144 aa)) is disordered. Residues S1349, S1351, S1363, S1401, S1407, and S1439 each carry the phosphoserine modification. Residues 1352 to 1363 (PEEEEEEEEEGS) show a composition bias toward acidic residues.

This sequence belongs to the periaxin family. Homodimer (via PDZ domain). Interacts with SCN10A. Found in a complex with SCN10A. Interacts with DRP2. Identified in a dystroglycan complex that contains at least PRX, DRP2, UTRN, DMD and DAG1. Detected in a complex composed of at least EZR, AHNAK, PPL and PRX. Identified in a complex with EZR, AHNAK, BFSP1, BFSP2, ANK2, PLEC, VIM and spectrin. Detected in spinal cord. Isoform 1 and isoform 2 are found in sciatic nerve and Schwann cells.

The protein resides in the cell membrane. It localises to the nucleus. It is found in the cytoplasm. Its subcellular location is the cell junction. In terms of biological role, scaffolding protein that functions as part of a dystroglycan complex in Schwann cells, and as part of EZR and AHNAK-containing complexes in eye lens fiber cells. Required for the maintenance of the peripheral myelin sheath that is essential for normal transmission of nerve impulses and normal perception of sensory stimuli. Required for normal transport of MBP mRNA from the perinuclear to the paranodal regions. Required for normal remyelination after nerve injury. Required for normal elongation of Schwann cells and normal length of the internodes between the nodes of Ranvier. The demyelinated nodes of Ranvier permit saltatory transmission of nerve impulses; shorter internodes cause slower transmission of nerve impulses. Required for the formation of appositions between the abaxonal surface of the myelin sheath and the Schwann cell plasma membrane; the Schwann cell cytoplasm is restricted to regions between these appositions. Required for the formation of Cajal bands and of Schmidt-Lanterman incisures that correspond to short, cytoplasm-filled regions on myelinated nerves. Recruits DRP2 to the Schwann cell plasma membrane. Required for normal protein composition of the eye lens fiber cell plasma membrane and normal eye lens fiber cell morphology. The chain is Periaxin (PRX) from Homo sapiens (Human).